Reading from the N-terminus, the 597-residue chain is Elongation factor 4 (597 aa).

One can recognise a tr-type G domain in the interval 2–184; sequence KNIRNFSIIA…SIVEHLPAPE (183 aa). GTP is bound by residues 14 to 19 and 131 to 134; these read DHGKST and NKID.

This sequence belongs to the TRAFAC class translation factor GTPase superfamily. Classic translation factor GTPase family. LepA subfamily.

It localises to the cell inner membrane. It catalyses the reaction GTP + H2O = GDP + phosphate + H(+). In terms of biological role, required for accurate and efficient protein synthesis under certain stress conditions. May act as a fidelity factor of the translation reaction, by catalyzing a one-codon backward translocation of tRNAs on improperly translocated ribosomes. Back-translocation proceeds from a post-translocation (POST) complex to a pre-translocation (PRE) complex, thus giving elongation factor G a second chance to translocate the tRNAs correctly. Binds to ribosomes in a GTP-dependent manner. This Desulfotalea psychrophila (strain LSv54 / DSM 12343) protein is Elongation factor 4.